The sequence spans 474 residues: MEVINTLFKLAGTNQEHAQSAQPEPMIEEYFTTGYTPAEPIVVEEYFTRGVSSETIYVKDEEYDPASNWVVPKREEPKSPGPMVWLNESSADNGPNYKRVDRVTGETSLVTRDREDVRKMSLMLMDKHQDMLRGELLNFQNNINKSGSCLMCRKVKCTTVKSPCCGLDFCNTCITVMGRRFHAKNFDINKPMESDLINNESPIKEVPECPFCGNDFFNEDCQFSKIFMRDLLERCENDCGMEQFYIAKLKKRCAKRTKRINKNKRLAKDLSKKISHKIFRRIESEAGKISPGARGKFVANKIRENKGKVDFSVMTQKYYHYSAVDMVRYGCGLSGLTQVLDAEPRLTNGSCKDHKDDGFGIIPVHKHAYTGNFEPAILKLAIEREEFDIFNAVDNELNTVVHDIMNMPHPNGSDKYLPFLEKNVNLFSSVMDQQNDRGYTPRTLAKFGIMSCDKCDGNTCERGRILKEKYNVTV.

This is an uncharacterized protein from Magallana gigas (Pacific oyster).